A 390-amino-acid chain; its full sequence is Histamine H4 receptor (390 aa).

Topologically, residues 1–19 are extracellular; the sequence is MPDTNSTINLSLSTRVTLA. Residues Asn5 and Asn9 are each glycosylated (N-linked (GlcNAc...) asparagine). The chain crosses the membrane as a helical span at residues 20–40; sequence FFMSLVAFAIMLGNALVILAF. Over 41-52 the chain is Cytoplasmic; sequence VVDKNLRHRSSY. The helical transmembrane segment at 53–73 threads the bilayer; the sequence is FFLNLAISDFFVGVISIPLYI. Over 74–87 the chain is Extracellular; sequence PHTLFEWDFGKEIC. The cysteines at positions 87 and 164 are disulfide-linked. Residues 88-108 traverse the membrane as a helical segment; that stretch reads VFWLTTDYLLCTASVYNIVLI. At 109 to 131 the chain is on the cytoplasmic side; it reads SYDRYLSVSNAVSYRTQHTGVLK. The chain crosses the membrane as a helical span at residues 132–152; that stretch reads IVTLMVAVWVLAFLVNGPMIL. Residues 153-172 lie on the Extracellular side of the membrane; that stretch reads VSESWKDEGSECEPGFFSEW. A helical membrane pass occupies residues 173-193; it reads YILAITSFLEFVIPVILVAYF. Residues 194–304 lie on the Cytoplasmic side of the membrane; sequence NMNIYWSLWK…LLRARRLAKS (111 aa). Residues 305 to 325 traverse the membrane as a helical segment; sequence LAILLGVFAVCWAPYSLFTIV. Residues 326–341 are Extracellular-facing; it reads LSFYSSATGPKSVWYR. Residues 342 to 362 form a helical membrane-spanning segment; that stretch reads IAFWLQWFNSFVNPLLYPLCH. At 363–390 the chain is on the cytoplasmic side; that stretch reads KRFQKAFLKIFCIKKQPLPSQHSRSVSS.

The protein belongs to the G-protein coupled receptor 1 family. Interacts with TSPAN4. Expressed primarily in the bone marrow and eosinophils. Shows preferential distribution in cells of immunological relevance such as T-cells, dendritic cells, monocytes, mast cells, neutrophils. Also expressed in a wide variety of peripheral tissues, including the heart, kidney, liver, lung, pancreas, skeletal muscle, prostate, small intestine, spleen, testis, colon, fetal liver and lymph node.

The protein resides in the cell membrane. Functionally, the H4 subclass of histamine receptors could mediate the histamine signals in peripheral tissues. Displays a significant level of constitutive activity (spontaneous activity in the absence of agonist). This Homo sapiens (Human) protein is Histamine H4 receptor (HRH4).